An 85-amino-acid chain; its full sequence is Putative membrane protein insertion efficiency factor (85 aa).

It belongs to the UPF0161 family.

The protein resides in the cell inner membrane. Functionally, could be involved in insertion of integral membrane proteins into the membrane. This chain is Putative membrane protein insertion efficiency factor, found in Sodalis glossinidius (strain morsitans).